A 75-amino-acid chain; its full sequence is Endogenous retrovirus group K member 10 Np9 protein (75 aa).

Residues 21–43 are disordered; the sequence is PTAPKRQRPSRTGHDDDGGFVEK. The segment covering 32–43 has biased composition (basic and acidic residues); it reads TGHDDDGGFVEK.

The protein localises to the nucleus. Functionally, may possess a function in tumorigenesis. In Homo sapiens (Human), this protein is Endogenous retrovirus group K member 10 Np9 protein (ERVK-10).